The following is a 319-amino-acid chain: Malate dehydrogenase (319 aa).

Residues 10-15 (GAGNIG) and Asp34 contribute to the NAD(+) site. Residues Arg83 and Arg89 each contribute to the substrate site. Residues Asn96 and 119 to 121 (ITN) each bind NAD(+). Asn121 and Arg152 together coordinate substrate. His176 functions as the Proton acceptor in the catalytic mechanism.

Belongs to the LDH/MDH superfamily. MDH type 3 family.

The enzyme catalyses (S)-malate + NAD(+) = oxaloacetate + NADH + H(+). Catalyzes the reversible oxidation of malate to oxaloacetate. In Francisella tularensis subsp. tularensis (strain FSC 198), this protein is Malate dehydrogenase.